Reading from the N-terminus, the 693-residue chain is Elongation factor G (693 aa).

In terms of domain architecture, tr-type G spans 8 to 282 (KNTRNIGIMA…AAIEYLPSPL (275 aa)). Residues 17–24 (AHIDAGKT), 81–85 (DTPGH), and 135–138 (NKMD) each bind GTP.

Belongs to the TRAFAC class translation factor GTPase superfamily. Classic translation factor GTPase family. EF-G/EF-2 subfamily.

It localises to the cytoplasm. Catalyzes the GTP-dependent ribosomal translocation step during translation elongation. During this step, the ribosome changes from the pre-translocational (PRE) to the post-translocational (POST) state as the newly formed A-site-bound peptidyl-tRNA and P-site-bound deacylated tRNA move to the P and E sites, respectively. Catalyzes the coordinated movement of the two tRNA molecules, the mRNA and conformational changes in the ribosome. In Macrococcus caseolyticus (strain JCSC5402) (Macrococcoides caseolyticum), this protein is Elongation factor G.